We begin with the raw amino-acid sequence, 141 residues long: Large ribosomal subunit protein uL11 (141 aa).

This sequence belongs to the universal ribosomal protein uL11 family. As to quaternary structure, part of the ribosomal stalk of the 50S ribosomal subunit. Interacts with L10 and the large rRNA to form the base of the stalk. L10 forms an elongated spine to which L12 dimers bind in a sequential fashion forming a multimeric L10(L12)X complex. One or more lysine residues are methylated.

Forms part of the ribosomal stalk which helps the ribosome interact with GTP-bound translation factors. The protein is Large ribosomal subunit protein uL11 of Helicobacter acinonychis (strain Sheeba).